A 136-amino-acid polypeptide reads, in one-letter code: Probable endoribonuclease MazF7 (136 aa).

The segment at 115–136 is disordered; that stretch reads TGPERGEAATHSPVRWTGGRDP.

Belongs to the PemK/MazF family. As to quaternary structure, forms a complex with cognate antitoxin MazE7.

In terms of biological role, toxic component of a type II toxin-antitoxin (TA) system. Upon expression in E.coli and M.smegmatis inhibits cell growth and colony formation. Its toxic effect is neutralized by coexpression with cognate antitoxin MazE7. Probably an endoribonuclease. This Mycobacterium tuberculosis (strain ATCC 25618 / H37Rv) protein is Probable endoribonuclease MazF7 (mazF7).